Here is an 83-residue protein sequence, read N- to C-terminus: Erabutoxin c (83 aa).

An N-terminal signal peptide occupies residues 1 to 21; it reads MKTLLLTLVVVTIVCLDLGYT. Residues 24–38 form a loop I region; it reads CFNHQSSQPQTTKTC. Intrachain disulfides connect C24–C45, C38–C62, C64–C75, and C76–C81. Residues 39-44 are stretch between loop I and loop II; it reads SPGESS. Residues 45–62 are loop II; it reads CYHKQWSDFRGTIIERGC. The interval 64–75 is loop III; sequence CPTVKPGINLSC.

This sequence belongs to the three-finger toxin family. Short-chain subfamily. Type I alpha-neurotoxin sub-subfamily. In terms of tissue distribution, expressed by the venom gland.

Its subcellular location is the secreted. Binds to muscle nicotinic acetylcholine receptor (nAChR) and inhibit acetylcholine from binding to the receptor, thereby impairing neuromuscular transmission. Binds to Torpedo marmorata nAChR (Kd=0.14 nM). The polypeptide is Erabutoxin c (Laticauda semifasciata (Black-banded sea krait)).